A 429-amino-acid polypeptide reads, in one-letter code: Zinc metalloproteinase nas-17 (429 aa).

A signal peptide spans 1–21 (MFLRPSTLLLTLFLALVAGSA). Residue N54 is glycosylated (N-linked (GlcNAc...) asparagine). One can recognise a Peptidase M12A domain in the interval 62-251 (RQITKIWKKW…VNINVRYSCG (190 aa)). 4 disulfides stabilise this stretch: C104/C250, C125/C144, C252/C272, and C274/C283. Zn(2+) is bound at residue H152. E153 is an active-site residue. H156 and H162 together coordinate Zn(2+). Residues 245-284 (NVRYSCGCAKSLTCENGGYTNPSNCATCVCPTGFAGTLCN) enclose the EGF-like domain.

Zn(2+) is required as a cofactor.

It localises to the secreted. Functionally, metalloprotease. This is Zinc metalloproteinase nas-17 (nas-17) from Caenorhabditis elegans.